The following is a 404-amino-acid chain: ATP phosphoribosyltransferase regulatory subunit (404 aa).

Belongs to the class-II aminoacyl-tRNA synthetase family. HisZ subfamily. As to quaternary structure, heteromultimer composed of HisG and HisZ subunits.

It localises to the cytoplasm. The protein operates within amino-acid biosynthesis; L-histidine biosynthesis; L-histidine from 5-phospho-alpha-D-ribose 1-diphosphate: step 1/9. Required for the first step of histidine biosynthesis. May allow the feedback regulation of ATP phosphoribosyltransferase activity by histidine. This Trichormus variabilis (strain ATCC 29413 / PCC 7937) (Anabaena variabilis) protein is ATP phosphoribosyltransferase regulatory subunit.